A 261-amino-acid chain; its full sequence is Triosephosphate isomerase (261 aa).

Asn10–Lys12 provides a ligand contact to substrate. His100 serves as the catalytic Electrophile. Glu172 functions as the Proton acceptor in the catalytic mechanism. Residues Gly178, Ser218, and Gly239–Gly240 contribute to the substrate site.

The protein belongs to the triosephosphate isomerase family. In terms of assembly, homodimer.

The protein resides in the cytoplasm. The enzyme catalyses D-glyceraldehyde 3-phosphate = dihydroxyacetone phosphate. It participates in carbohydrate biosynthesis; gluconeogenesis. The protein operates within carbohydrate degradation; glycolysis; D-glyceraldehyde 3-phosphate from glycerone phosphate: step 1/1. Functionally, involved in the gluconeogenesis. Catalyzes stereospecifically the conversion of dihydroxyacetone phosphate (DHAP) to D-glyceraldehyde-3-phosphate (G3P). This Nocardia farcinica (strain IFM 10152) protein is Triosephosphate isomerase.